A 154-amino-acid chain; its full sequence is Secreted RxLR effector protein PITG_21681 (154 aa).

Positions 1 to 20 (MRRYAALMVIDAVLLSTSQA) are cleaved as a signal peptide. The segment at 42–70 (SAERDGGIPNKRSLRRISVTESNDGERDE) is disordered. The RxLR-dEER motif lies at 53 to 72 (RSLRRISVTESNDGERDEER).

This sequence belongs to the RxLR effector family.

Its subcellular location is the secreted. It is found in the host cell. Its function is as follows. Secreted effector that is involved in host plant infection. Increases the susceptibility to P.infestans and reduces the plant growth. Affects the expression of host genes. This chain is Secreted RxLR effector protein PITG_21681, found in Phytophthora infestans (strain T30-4) (Potato late blight agent).